The sequence spans 540 residues: BTB/POZ domain-containing protein 6-A (540 aa).

The BTB domain maps to 138-208; sequence ADVHFIVGPP…MYSDEIELAP (71 aa).

Interacts with cul3. Interacts (via BTB domain) with zbtb16/plzf. Expressed in the developing central nervous system.

The protein localises to the cytoplasm. It is found in the nucleus. Functionally, adapter protein for the cul3 E3 ubiquitin-protein ligase complex. Promotes the export of zbtb16/plzf from the nucleus to the cytoplasm and targets zbtb16/plzf for ubiquitination and degradation. Up-regulates neurog1 expression and antagonizes zbtb16/plzf, to promote neurogenesis. This Danio rerio (Zebrafish) protein is BTB/POZ domain-containing protein 6-A (btbd6a).